The primary structure comprises 728 residues: Catalase-peroxidase 2 (728 aa).

A disordered region spans residues 1–20 (MSNEGKCPFNHGKRNGTTNR). The segment at residues 91–214 (WHSAGTYRTG…LAAVQMGLIY (124 aa)) is a cross-link (tryptophyl-tyrosyl-methioninium (Trp-Tyr) (with M-240)). The Proton acceptor role is filled by H92. A cross-link (tryptophyl-tyrosyl-methioninium (Tyr-Met) (with W-91)) is located at residues 214 to 240 (YVNPEGPNGNPDPLASARDIRETFARM). H255 is a heme b binding site. Positions 335–355 (AHQWQPKGGAGADSVPDPFEP) are disordered.

The protein belongs to the peroxidase family. Peroxidase/catalase subfamily. Homodimer or homotetramer. Heme b serves as cofactor. Formation of the three residue Trp-Tyr-Met cross-link is important for the catalase, but not the peroxidase activity of the enzyme.

The enzyme catalyses H2O2 + AH2 = A + 2 H2O. The catalysed reaction is 2 H2O2 = O2 + 2 H2O. In terms of biological role, bifunctional enzyme with both catalase and broad-spectrum peroxidase activity. In Burkholderia cenocepacia (strain HI2424), this protein is Catalase-peroxidase 2.